The sequence spans 231 residues: MSKNCAIVVAAGKGTRMNTDINKQFINLKGNPILYYTLKKFQDNTSIDNIVLVLSKDEIGYCVENVLKKYHLDKVTHIVEGGKTRQESVISGLNAVKDSEIVLIHDGARPFIEDRIIEDGIKYAKLYGASACGVKVKDTIKVIAEDGFSKDTLKREELFSVQTPQCFKYDLILNCHKKALKDNIEVTDDTSVVESYGHRVYLYEGSYNNIKITTPEDLPMGESILENIKTC.

This sequence belongs to the IspD/TarI cytidylyltransferase family. IspD subfamily.

It catalyses the reaction 2-C-methyl-D-erythritol 4-phosphate + CTP + H(+) = 4-CDP-2-C-methyl-D-erythritol + diphosphate. Its pathway is isoprenoid biosynthesis; isopentenyl diphosphate biosynthesis via DXP pathway; isopentenyl diphosphate from 1-deoxy-D-xylulose 5-phosphate: step 2/6. Its function is as follows. Catalyzes the formation of 4-diphosphocytidyl-2-C-methyl-D-erythritol from CTP and 2-C-methyl-D-erythritol 4-phosphate (MEP). This Clostridium novyi (strain NT) protein is 2-C-methyl-D-erythritol 4-phosphate cytidylyltransferase.